We begin with the raw amino-acid sequence, 908 residues long: AdoMet-dependent rRNA methyltransferase SPB1 (908 aa).

5 residues coordinate S-adenosyl-L-methionine: G57, W59, D77, D93, and D118. Catalysis depends on K158, which acts as the Proton acceptor. Residues 378–422 (MDEEEQITEELQKLQQAKLAKTKRERKRANEKKARELLKLQLNMT) are a coiled coil. Disordered stretches follow at residues 440–513 (IFDL…YDSY), 535–715 (NFDA…DEVK), and 806–841 (AKGR…EKAR). Over residues 464 to 493 (DDGEGMDLASESEEEEDEDEEDDEVLDSDE) the composition is skewed to acidic residues. The span at 535 to 545 (NFDAWHGIQEK) shows a compositional bias: basic and acidic residues. 2 stretches are compositionally biased toward acidic residues: residues 546–564 (SDEE…EEGG) and 579–591 (DSSD…EPET). Residues 592–610 (EVPKKIKKVSFEKPARSEK) are compositionally biased toward basic and acidic residues. 2 stretches are compositionally biased toward acidic residues: residues 650-678 (DGDD…EDAS) and 685-712 (EGDD…EDQD). Residues 816–827 (ARMEKAKKKADG) show a composition bias toward basic and acidic residues.

It belongs to the class I-like SAM-binding methyltransferase superfamily. RNA methyltransferase RlmE family. SPB1 subfamily. Component of the nucleolar and nucleoplasmic pre-60S ribosomal particle.

It localises to the nucleus. It is found in the nucleolus. It carries out the reaction a ribonucleotide in rRNA + S-adenosyl-L-methionine = a 2'-O-methylribonucleotide in rRNA + S-adenosyl-L-homocysteine + H(+). Functionally, required for proper assembly of pre-ribosomal particles during the biogenesis of the 60S ribosomal subunit. The polypeptide is AdoMet-dependent rRNA methyltransferase SPB1 (Cryptococcus neoformans var. neoformans serotype D (strain B-3501A) (Filobasidiella neoformans)).